Consider the following 99-residue polypeptide: NADH-quinone oxidoreductase subunit K (99 aa).

Helical transmembrane passes span 3 to 23 (PDNY…GVLL), 28 to 48 (IVVF…FVAF), and 59 to 79 (VVAF…LAII).

It belongs to the complex I subunit 4L family. As to quaternary structure, NDH-1 is composed of 14 different subunits. Subunits NuoA, H, J, K, L, M, N constitute the membrane sector of the complex.

Its subcellular location is the cell membrane. The enzyme catalyses a quinone + NADH + 5 H(+)(in) = a quinol + NAD(+) + 4 H(+)(out). Functionally, NDH-1 shuttles electrons from NADH, via FMN and iron-sulfur (Fe-S) centers, to quinones in the respiratory chain. The immediate electron acceptor for the enzyme in this species is believed to be a menaquinone. Couples the redox reaction to proton translocation (for every two electrons transferred, four hydrogen ions are translocated across the cytoplasmic membrane), and thus conserves the redox energy in a proton gradient. The chain is NADH-quinone oxidoreductase subunit K from Mycobacterium sp. (strain JLS).